The primary structure comprises 105 residues: MAEWKGEYVSPYAEHGKKSEQVKKITVSIPLKVLKILTDERTRRQVNNLRHATNSELLCEAFLHAFTGQPLPDDHDLRKERNDEIPEVAKDMMREMGIDPDTWEY.

Belongs to the MetJ family. In terms of assembly, homodimer.

The protein resides in the cytoplasm. In terms of biological role, this regulatory protein, when combined with SAM (S-adenosylmethionine) represses the expression of the methionine regulon and of enzymes involved in SAM synthesis. In Sodalis glossinidius (strain morsitans), this protein is Met repressor.